The primary structure comprises 294 residues: Large ribosomal subunit protein uL2 (294 aa).

2 disordered regions span residues 1–37 and 228–294; these read MGIR…RPEK and GSVM…RAAQ. Residues 23–37 are compositionally biased toward basic and acidic residues; that stretch reads ELSRDENGKRPRPEK. Over residues 264–285 the composition is skewed to basic residues; the sequence is KTRKRNKPSNKFIVRGRRRGGR.

It belongs to the universal ribosomal protein uL2 family. As to quaternary structure, part of the 50S ribosomal subunit. Forms a bridge to the 30S subunit in the 70S ribosome.

Its function is as follows. One of the primary rRNA binding proteins. Required for association of the 30S and 50S subunits to form the 70S ribosome, for tRNA binding and peptide bond formation. It has been suggested to have peptidyltransferase activity; this is somewhat controversial. Makes several contacts with the 16S rRNA in the 70S ribosome. The sequence is that of Large ribosomal subunit protein uL2 from Synechococcus sp. (strain JA-2-3B'a(2-13)) (Cyanobacteria bacterium Yellowstone B-Prime).